The sequence spans 246 residues: UDP-N-acetyl-D-mannosaminuronic acid transferase (246 aa).

The protein belongs to the glycosyltransferase 26 family.

It catalyses the reaction UDP-N-acetyl-alpha-D-mannosaminouronate + N-acetyl-alpha-D-glucosaminyl-di-trans,octa-cis-undecaprenyl diphosphate = beta-D-ManNAcA-(1-&gt;4)-alpha-D-GlcNAc-di-trans,octa-cis-undecaprenyl diphosphate + UDP + H(+). Its pathway is bacterial outer membrane biogenesis; enterobacterial common antigen biosynthesis. Its function is as follows. Catalyzes the synthesis of Und-PP-GlcNAc-ManNAcA (Lipid II), the second lipid-linked intermediate involved in enterobacterial common antigen (ECA) synthesis. This chain is UDP-N-acetyl-D-mannosaminuronic acid transferase, found in Salmonella paratyphi A (strain ATCC 9150 / SARB42).